Here is a 444-residue protein sequence, read N- to C-terminus: MPCSSPACPACPAAGPAPVTLTRMQAWPFPQLPKLPGQGRDLRVLDTAHGGVRTLDLGPTVRLYACGITPYDATHLGHAFTYLTYDLVQRVLRDAGHEVRYVQNVTDVDDPLLERATRDGIDWRDLARREIDLFRADMTALRILPPDHYVGVVEAVGLIVDMVSQLVERGAAYSVDGDLYFSVAAAPDFGQVAHLDPAQMLVSCAEHGGDPGRPGKKDPLDPLLWRAERPGEPSWPSPFGPGRPGWHVECSAIARHYLGATIDIQGGGSDLAFPHHECSAAHAEVANGARPFARAYVHTALVSLDGHKMSKSRGNLEFVSRLLARGADPAAIRLALLQHHHTVEWEWTAAAMPAAAERLDRWRAAVALPSGPDFRPVLAEVRDRLADDLDAPGALAAVDAWAAAALAAGSGGSGEADDQAPATVRDTVDSLLGVDLGPVLPRGT.

Position 66 (Cys-66) interacts with Zn(2+). L-cysteinyl-5'-AMP contacts are provided by residues 66 to 69 (CGIT), Thr-81, and 104 to 106 (NVT). The 'HIGH' region signature appears at 68 to 78 (ITPYDATHLGH). A 'ERGGDP' region motif is present at residues 206-211 (EHGGDP). Position 246 (Trp-246) interacts with L-cysteinyl-5'-AMP. Cys-250 contacts Zn(2+). Residue 268 to 270 (GSD) participates in L-cysteinyl-5'-AMP binding. His-275 contributes to the Zn(2+) binding site. Val-302 provides a ligand contact to L-cysteinyl-5'-AMP. The 'KMSKS' region motif lies at 308–312 (KMSKS).

The protein belongs to the class-I aminoacyl-tRNA synthetase family. MshC subfamily. Monomer. Zn(2+) serves as cofactor.

The catalysed reaction is 1D-myo-inositol 2-amino-2-deoxy-alpha-D-glucopyranoside + L-cysteine + ATP = 1D-myo-inositol 2-(L-cysteinylamino)-2-deoxy-alpha-D-glucopyranoside + AMP + diphosphate + H(+). In terms of biological role, catalyzes the ATP-dependent condensation of GlcN-Ins and L-cysteine to form L-Cys-GlcN-Ins. The sequence is that of L-cysteine:1D-myo-inositol 2-amino-2-deoxy-alpha-D-glucopyranoside ligase from Parafrankia sp. (strain EAN1pec).